A 41-amino-acid chain; its full sequence is uncharacterized protein (41 aa).

Positions 1 to 41 are disordered; that stretch reads MGKKHRNRITGQKKNNHIPEKDIIAAEEAHGKEYSAAKRKP. Residues 17–41 show a composition bias toward basic and acidic residues; the sequence is HIPEKDIIAAEEAHGKEYSAAKRKP.

This is an uncharacterized protein from Bacillus subtilis (strain 168).